Here is a 213-residue protein sequence, read N- to C-terminus: MKESSRLRGLYAITDSKLLADGRLLPYVEAALKGGARLLQYRDKTSDEARRLREADALQELCARHGAQLIINDDAELAARLGVGLHLGQEDGSLAAARALLGRQAIIGATCHAQLPLAEQAARDGASYVAFGRFFQSHTKPGAPAANHELLREARARIGLPIVAIGGITLDTAPSLIAEGVQMIAVIHALFAADSAAEVERRAQAFSQLFNTP.

Residues Gln40–Lys44 and Asn72 each bind 4-amino-2-methyl-5-(diphosphooxymethyl)pyrimidine. Mg(2+)-binding residues include Asp73 and Asp91. Residue Thr110 coordinates 4-amino-2-methyl-5-(diphosphooxymethyl)pyrimidine. Ser137–Thr139 contacts 2-[(2R,5Z)-2-carboxy-4-methylthiazol-5(2H)-ylidene]ethyl phosphate. Lys140 provides a ligand contact to 4-amino-2-methyl-5-(diphosphooxymethyl)pyrimidine. Gly167 is a binding site for 2-[(2R,5Z)-2-carboxy-4-methylthiazol-5(2H)-ylidene]ethyl phosphate.

It belongs to the thiamine-phosphate synthase family. It depends on Mg(2+) as a cofactor.

It carries out the reaction 2-[(2R,5Z)-2-carboxy-4-methylthiazol-5(2H)-ylidene]ethyl phosphate + 4-amino-2-methyl-5-(diphosphooxymethyl)pyrimidine + 2 H(+) = thiamine phosphate + CO2 + diphosphate. The catalysed reaction is 2-(2-carboxy-4-methylthiazol-5-yl)ethyl phosphate + 4-amino-2-methyl-5-(diphosphooxymethyl)pyrimidine + 2 H(+) = thiamine phosphate + CO2 + diphosphate. The enzyme catalyses 4-methyl-5-(2-phosphooxyethyl)-thiazole + 4-amino-2-methyl-5-(diphosphooxymethyl)pyrimidine + H(+) = thiamine phosphate + diphosphate. It participates in cofactor biosynthesis; thiamine diphosphate biosynthesis; thiamine phosphate from 4-amino-2-methyl-5-diphosphomethylpyrimidine and 4-methyl-5-(2-phosphoethyl)-thiazole: step 1/1. In terms of biological role, condenses 4-methyl-5-(beta-hydroxyethyl)thiazole monophosphate (THZ-P) and 2-methyl-4-amino-5-hydroxymethyl pyrimidine pyrophosphate (HMP-PP) to form thiamine monophosphate (TMP). This chain is Thiamine-phosphate synthase, found in Stutzerimonas stutzeri (strain A1501) (Pseudomonas stutzeri).